The primary structure comprises 295 residues: Protease HtpX (295 aa).

Transmembrane regions (helical) follow at residues 4 to 24 and 42 to 62; these read ILLF…TLSL and QLLV…LFIS. H147 is a Zn(2+) binding site. The active site involves E148. Zn(2+) is bound at residue H151. Helical transmembrane passes span 158-178 and 199-219; these read VTLA…ARII and ITTI…VMWF. E224 contacts Zn(2+).

It belongs to the peptidase M48B family. It depends on Zn(2+) as a cofactor.

Its subcellular location is the cell inner membrane. The protein is Protease HtpX of Pseudomonas syringae pv. syringae (strain B728a).